The following is a 176-amino-acid chain: NAD(P)H-quinone oxidoreductase subunit 6, chloroplastic (176 aa).

Transmembrane regions (helical) follow at residues 10–30, 32–52, 61–81, 92–112, and 152–172; these read FLLV…VLLT, PIYS…FYIL, AQLL…VMFM, LWTI…VSLI, and FFLP…GAIA.

It belongs to the complex I subunit 6 family. In terms of assembly, NDH is composed of at least 16 different subunits, 5 of which are encoded in the nucleus.

It is found in the plastid. The protein localises to the chloroplast thylakoid membrane. The enzyme catalyses a plastoquinone + NADH + (n+1) H(+)(in) = a plastoquinol + NAD(+) + n H(+)(out). It catalyses the reaction a plastoquinone + NADPH + (n+1) H(+)(in) = a plastoquinol + NADP(+) + n H(+)(out). NDH shuttles electrons from NAD(P)H:plastoquinone, via FMN and iron-sulfur (Fe-S) centers, to quinones in the photosynthetic chain and possibly in a chloroplast respiratory chain. The immediate electron acceptor for the enzyme in this species is believed to be plastoquinone. Couples the redox reaction to proton translocation, and thus conserves the redox energy in a proton gradient. In Gossypium hirsutum (Upland cotton), this protein is NAD(P)H-quinone oxidoreductase subunit 6, chloroplastic (ndhG).